A 310-amino-acid polypeptide reads, in one-letter code: AMMECR1-like protein (310 aa).

Positions 26-92 (LSGSGTHSHG…SGALSPLPRP (67 aa)) are disordered. 2 stretches are compositionally biased toward polar residues: residues 28-66 (GSGT…NVSD) and 74-84 (SPITRMNTASG). Serine 74 is modified (phosphoserine). One can recognise an AMMECR1 domain in the interval 97–291 (NSTKNLVVTA…ISYAEYIASR (195 aa)).

This is AMMECR1-like protein (Ammecr1l) from Mus musculus (Mouse).